Consider the following 548-residue polypeptide: Beta-caryophyllene synthase (548 aa).

(2E,6E)-farnesyl diphosphate-binding residues include Arg-268, Asp-305, Asp-309, Arg-446, and Asp-449. Mg(2+) is bound by residues Asp-305 and Asp-309. Positions 305–309 (DDIYD) match the DDXXD motif motif. Asp-449 and Glu-457 together coordinate Mg(2+).

This sequence belongs to the terpene synthase family. Mg(2+) is required as a cofactor.

It catalyses the reaction (2E,6E)-farnesyl diphosphate = (-)-(E)-beta-caryophyllene + diphosphate. The protein operates within secondary metabolite biosynthesis; terpenoid biosynthesis. Its function is as follows. Sesquiterpene synthase that catalyzes the formation of sesquiterpenes and sesquiterpenoid alcohols. Converts farnesyl diphosphate (FPP) to beta-caryophyllene. Can use geranyl diphosphate (GPP) to produce myrcene, limonene and camphene. This Lavandula angustifolia (Lavender) protein is Beta-caryophyllene synthase.